The following is a 636-amino-acid chain: 1-deoxy-D-xylulose-5-phosphate synthase (636 aa).

Thiamine diphosphate is bound by residues histidine 72 and 113–115; that span reads GHA. Aspartate 144 is a binding site for Mg(2+). Residues 145–146, asparagine 174, tyrosine 287, and glutamate 370 each bind thiamine diphosphate; that span reads GS. Residue asparagine 174 coordinates Mg(2+).

It belongs to the transketolase family. DXPS subfamily. In terms of assembly, homodimer. Requires Mg(2+) as cofactor. It depends on thiamine diphosphate as a cofactor.

The catalysed reaction is D-glyceraldehyde 3-phosphate + pyruvate + H(+) = 1-deoxy-D-xylulose 5-phosphate + CO2. Its pathway is metabolic intermediate biosynthesis; 1-deoxy-D-xylulose 5-phosphate biosynthesis; 1-deoxy-D-xylulose 5-phosphate from D-glyceraldehyde 3-phosphate and pyruvate: step 1/1. Catalyzes the acyloin condensation reaction between C atoms 2 and 3 of pyruvate and glyceraldehyde 3-phosphate to yield 1-deoxy-D-xylulose-5-phosphate (DXP). The protein is 1-deoxy-D-xylulose-5-phosphate synthase of Synechococcus sp. (strain ATCC 27144 / PCC 6301 / SAUG 1402/1) (Anacystis nidulans).